Consider the following 471-residue polypeptide: Intraflagellar transport protein 46 homolog (471 aa).

Disordered stretches follow at residues 1 to 202 (MSSE…SNMR) and 226 to 246 (SRLEDDSSNDDDDDDDDEDDD). Acidic residues-rich tracts occupy residues 89–99 (SEPQEVIDVND) and 231–246 (DSSNDDDDDDDDEDDD).

This sequence belongs to the IFT46 family. As to quaternary structure, component of the IFT complex B composed of at least che-2, che-13, dyf-1, dyf-3, dyf-6, dyf-11, dyf-13, ift-20, ift-74, ift-81, ifta-2, osm-1, osm-5 and osm-6. Expressed in the hypodermis and sensory neurons including inner labial, PDE, amphid and phasmid neurons.

Its subcellular location is the cell projection. It localises to the cilium. It is found in the cytoplasm. The protein resides in the cytoskeleton. The protein localises to the cilium basal body. Its subcellular location is the dendrite. It localises to the perikaryon. Component of the intraflagellar transport (IFT) complex B required for transport of proteins in the motile cilium. May be required for ciliary entrance and transport of specific ciliary cargo proteins such as che-3 which are related to motility. Required for normal morphology and function of ciliated amphid sensory neurons. The protein is Intraflagellar transport protein 46 homolog of Caenorhabditis elegans.